Reading from the N-terminus, the 278-residue chain is Putative phosphoenolpyruvate synthase regulatory protein (278 aa).

157 to 164 is a binding site for ADP; the sequence is GVSRSGKT.

This sequence belongs to the pyruvate, phosphate/water dikinase regulatory protein family. PSRP subfamily.

It carries out the reaction [pyruvate, water dikinase] + ADP = [pyruvate, water dikinase]-phosphate + AMP + H(+). It catalyses the reaction [pyruvate, water dikinase]-phosphate + phosphate + H(+) = [pyruvate, water dikinase] + diphosphate. Its function is as follows. Bifunctional serine/threonine kinase and phosphorylase involved in the regulation of the phosphoenolpyruvate synthase (PEPS) by catalyzing its phosphorylation/dephosphorylation. The protein is Putative phosphoenolpyruvate synthase regulatory protein of Vibrio parahaemolyticus serotype O3:K6 (strain RIMD 2210633).